Consider the following 263-residue polypeptide: uncharacterized protein (263 aa).

The DOD-type homing endonuclease domain occupies 107 to 246 (ILGVLNGDGS…CCSFLEKLGI (140 aa)).

This is an uncharacterized protein from Methanocaldococcus jannaschii (strain ATCC 43067 / DSM 2661 / JAL-1 / JCM 10045 / NBRC 100440) (Methanococcus jannaschii).